We begin with the raw amino-acid sequence, 609 residues long: Replication factor A protein 1 (609 aa).

The span at glutamine 130–glycine 152 shows a compositional bias: polar residues. The interval glutamine 130–methionine 166 is disordered. Positions tryptophan 192–aspartate 278 form a DNA-binding region, OB. The C4-type zinc finger occupies cysteine 477 to cysteine 498.

It belongs to the replication factor A protein 1 family. As to quaternary structure, component of the heterotrimeric canonical replication protein A complex (RPA).

It localises to the nucleus. As part of the replication protein A (RPA/RP-A), a single-stranded DNA-binding heterotrimeric complex, may play an essential role in DNA replication, recombination and repair. Binds and stabilizes single-stranded DNA intermediates, preventing complementary DNA reannealing and recruiting different proteins involved in DNA metabolism. The protein is Replication factor A protein 1 (ssb1) of Schizosaccharomyces pombe (strain 972 / ATCC 24843) (Fission yeast).